Consider the following 156-residue polypeptide: MQQNKLSLSVQYADTRVQDILTRPLLRKWVKAALLAPAQITLRFVDAAEGQILNRNYRGKDYATNVLTFTYNDDDGSDIADDAVTQADIILCTDVLQREAAEQNKTLIFHAAHLVIHGVLHAQGYDHESDEEAEEMEALEIEFLAALGFPNPYIEA.

The Zn(2+) site is built by histidine 117, histidine 121, and histidine 127.

The protein belongs to the endoribonuclease YbeY family. The cofactor is Zn(2+).

The protein resides in the cytoplasm. Single strand-specific metallo-endoribonuclease involved in late-stage 70S ribosome quality control and in maturation of the 3' terminus of the 16S rRNA. The chain is Endoribonuclease YbeY from Herminiimonas arsenicoxydans.